We begin with the raw amino-acid sequence, 506 residues long: Beta-glucosidase 13 (506 aa).

Positions 1-25 (MAAAGEVVMLGGILLPLLLVVAVSG) are cleaved as a signal peptide. Gln-49 lines the a beta-D-glucoside pocket. N-linked (GlcNAc...) asparagine glycosylation is present at Asn-118. A beta-D-glucoside-binding positions include His-153 and 198-199 (NE). The active-site Proton donor is the Glu-199. A disulfide bridge links Cys-219 with Cys-226. N-linked (GlcNAc...) asparagine glycosylation is present at Asn-225. Tyr-342 provides a ligand contact to a beta-D-glucoside. 2 N-linked (GlcNAc...) asparagine glycosylation sites follow: Asn-357 and Asn-367. An a beta-D-glucoside-binding site is contributed by Glu-413. Residue Glu-413 is the Nucleophile of the active site. The N-linked (GlcNAc...) asparagine glycan is linked to Asn-421. A beta-D-glucoside-binding positions include Trp-462, 469–470 (EW), and Phe-478.

It belongs to the glycosyl hydrolase 1 family.

It catalyses the reaction Hydrolysis of terminal, non-reducing beta-D-glucosyl residues with release of beta-D-glucose.. The chain is Beta-glucosidase 13 (BGLU13) from Oryza sativa subsp. japonica (Rice).